The primary structure comprises 995 residues: UPF0182 protein NFA_45260 (995 aa).

7 helical membrane-spanning segments follow: residues 18–38 (VLLV…RFTD), 63–83 (IILF…ALLL), 115–135 (FGIG…QSNW), 176–196 (FVAV…FGGL), 211–231 (IQLA…YWFD), 260–280 (KLIL…GVVL), and 288–308 (MAAA…PLVV). A disordered region spans residues 904–957 (ATPFGGDPATRPQPGTAPPVVDSTQPPADGGTPQPQTTPPPTGSAAKDAAAAEL). 2 stretches are compositionally biased toward low complexity: residues 927–938 (TQPPADGGTPQP) and 946–955 (GSAAKDAAAA).

Belongs to the UPF0182 family.

The protein resides in the cell membrane. The sequence is that of UPF0182 protein NFA_45260 from Nocardia farcinica (strain IFM 10152).